The sequence spans 473 residues: tRNA-2-methylthio-N(6)-dimethylallyladenosine synthase (473 aa).

Residues 3-120 (MKLHVKTWGC…LPEMIKEVQE (118 aa)) form the MTTase N-terminal domain. Residues C12, C49, C83, C157, C161, and C164 each contribute to the [4Fe-4S] cluster site. Residues 143–375 (KADGATAFVS…QDRIQQQSQG (233 aa)) form the Radical SAM core domain. Positions 378 to 441 (RKMVGSVQRI…TNSIRGKFIR (64 aa)) constitute a TRAM domain.

It belongs to the methylthiotransferase family. MiaB subfamily. As to quaternary structure, monomer. Requires [4Fe-4S] cluster as cofactor.

The protein resides in the cytoplasm. It catalyses the reaction N(6)-dimethylallyladenosine(37) in tRNA + (sulfur carrier)-SH + AH2 + 2 S-adenosyl-L-methionine = 2-methylsulfanyl-N(6)-dimethylallyladenosine(37) in tRNA + (sulfur carrier)-H + 5'-deoxyadenosine + L-methionine + A + S-adenosyl-L-homocysteine + 2 H(+). Catalyzes the methylthiolation of N6-(dimethylallyl)adenosine (i(6)A), leading to the formation of 2-methylthio-N6-(dimethylallyl)adenosine (ms(2)i(6)A) at position 37 in tRNAs that read codons beginning with uridine. This is tRNA-2-methylthio-N(6)-dimethylallyladenosine synthase from Psychromonas ingrahamii (strain DSM 17664 / CCUG 51855 / 37).